A 235-amino-acid chain; its full sequence is MGGQRHTMIDDAAQRRRLEAGLAEIGLALPPDRIDTLFAYLALLRKWNGVYNLTAIRHPDEMLTHHLLDSLAAVPALAEMARSSEVGGAARGRVLDVGSGGGMPGLPLAISCPDVSVLMVDIVQKKTAFLTQCRAQLGLSNAAAHWGPVERLEDPDKFAVITSRAFAELTDFVNLSGHLLAPHGRLIAMKGVYPQAELDRMEAAGLMAAWQVEEVRRLTVPGLDAERHLVLLSRK.

S-adenosyl-L-methionine is bound by residues glycine 98, methionine 103, 149-150, and arginine 164; that span reads VE.

Belongs to the methyltransferase superfamily. RNA methyltransferase RsmG family.

It is found in the cytoplasm. It catalyses the reaction guanosine(527) in 16S rRNA + S-adenosyl-L-methionine = N(7)-methylguanosine(527) in 16S rRNA + S-adenosyl-L-homocysteine. Its function is as follows. Specifically methylates the N7 position of guanine in position 527 of 16S rRNA. This Cupriavidus pinatubonensis (strain JMP 134 / LMG 1197) (Cupriavidus necator (strain JMP 134)) protein is Ribosomal RNA small subunit methyltransferase G.